The sequence spans 357 residues: Carbamoyl phosphate synthase small chain (357 aa).

The interval 1 to 168 (MSKRLLILED…STATAYPSPN (168 aa)) is CPSase. Positions 46, 220, and 222 each coordinate L-glutamine. The Glutamine amidotransferase type-1 domain maps to 172–357 (KVVVVDFGLK…FMDLMDNFKK (186 aa)). Catalysis depends on Cys247, which acts as the Nucleophile. The L-glutamine site is built by Leu248, Gln251, Asn289, Gly291, and Tyr292. Active-site residues include His331 and Asp333.

The protein belongs to the CarA family. As to quaternary structure, composed of two chains; the small (or glutamine) chain promotes the hydrolysis of glutamine to ammonia, which is used by the large (or ammonia) chain to synthesize carbamoyl phosphate. Tetramer of heterodimers (alpha,beta)4.

It carries out the reaction hydrogencarbonate + L-glutamine + 2 ATP + H2O = carbamoyl phosphate + L-glutamate + 2 ADP + phosphate + 2 H(+). The catalysed reaction is L-glutamine + H2O = L-glutamate + NH4(+). The protein operates within amino-acid biosynthesis; L-arginine biosynthesis; carbamoyl phosphate from bicarbonate: step 1/1. It functions in the pathway pyrimidine metabolism; UMP biosynthesis via de novo pathway; (S)-dihydroorotate from bicarbonate: step 1/3. In terms of biological role, small subunit of the glutamine-dependent carbamoyl phosphate synthetase (CPSase). CPSase catalyzes the formation of carbamoyl phosphate from the ammonia moiety of glutamine, carbonate, and phosphate donated by ATP, constituting the first step of 2 biosynthetic pathways, one leading to arginine and/or urea and the other to pyrimidine nucleotides. The small subunit (glutamine amidotransferase) binds and cleaves glutamine to supply the large subunit with the substrate ammonia. The chain is Carbamoyl phosphate synthase small chain from Lactococcus lactis subsp. cremoris (strain MG1363).